The sequence spans 422 residues: Tyrosine--tRNA ligase 1 (422 aa).

Tyrosine 35 is an L-tyrosine binding site. The 'HIGH' region signature appears at 40-49 (PTADSLHIGH). L-tyrosine is bound by residues tyrosine 170 and glutamine 174. The 'KMSKS' region motif lies at 232 to 236 (KFGKT). Lysine 235 is a binding site for ATP. The S4 RNA-binding domain occupies 355–421 (LSLVDVLVQS…GKKKYFLVTY (67 aa)).

It belongs to the class-I aminoacyl-tRNA synthetase family. TyrS type 1 subfamily. Homodimer.

Its subcellular location is the cytoplasm. It carries out the reaction tRNA(Tyr) + L-tyrosine + ATP = L-tyrosyl-tRNA(Tyr) + AMP + diphosphate + H(+). Its function is as follows. Catalyzes the attachment of tyrosine to tRNA(Tyr) in a two-step reaction: tyrosine is first activated by ATP to form Tyr-AMP and then transferred to the acceptor end of tRNA(Tyr). This chain is Tyrosine--tRNA ligase 1, found in Bacillus subtilis (strain 168).